The following is a 1004-amino-acid chain: 2-oxoglutarate dehydrogenase E1 component (1004 aa).

This sequence belongs to the alpha-ketoglutarate dehydrogenase family. As to quaternary structure, homodimer. Part of the 2-oxoglutarate dehydrogenase (OGDH) complex composed of E1 (2-oxoglutarate dehydrogenase), E2 (dihydrolipoamide succinyltransferase) and E3 (dihydrolipoamide dehydrogenase); the complex contains multiple copies of the three enzymatic components (E1, E2 and E3). Requires thiamine diphosphate as cofactor.

The enzyme catalyses N(6)-[(R)-lipoyl]-L-lysyl-[protein] + 2-oxoglutarate + H(+) = N(6)-[(R)-S(8)-succinyldihydrolipoyl]-L-lysyl-[protein] + CO2. Functionally, E1 component of the 2-oxoglutarate dehydrogenase (OGDH) complex which catalyzes the decarboxylation of 2-oxoglutarate, the first step in the conversion of 2-oxoglutarate to succinyl-CoA and CO(2). The protein is 2-oxoglutarate dehydrogenase E1 component of Brucella abortus (strain S19).